Reading from the N-terminus, the 546-residue chain is MAAKDVKFGDSARKKMLVGVNVLADAVKATLGPKGRNVVLAKSFGAPTITKDGVSVAKEIELKDAFENMGAQLVKEVASKANDAAGDGTTTATVLAQAIVNEGLKAVAAGMNPMDLKRGIDKATAAVVAELKNLSKPCADSKAIAQVGTISANSDNSIGEIIAEAMEKVGKEGVITVEEGSGLENELSVVEGMQFDRGYLSPYFVNKPDTMVAELESPLLLLVDKKISNIRELLPVLEAVAKAGRPLLIVAEDVEGEALATLVVNNMRGIVKVAAVKAPGFGDRRKAMLQDIAVLTGGQVISEEIGLTLETTTLEHLGNAKRVILSKENTTIIDGAGVDADIEARVKQIRAQIEETSSDYDREKLQERLAKLAGGVAVIKVGAGTEVEMKEKKARVEDALHATRAAVEEGVVPGGGVALVRALAAIVDLKGDNEDQNVGIALLRRAVEAPLRQITANAGDEPSVVADKVKQGSGNYGYNAATGEYGDMIEMGILDPAKVTRSALQAAASIGGLMITTEAMVADLPEDKPAGGMPDMGGMGGMGGMM.

Residues 30–33 (TLGP), Lys51, 87–91 (DGTTT), Gly415, 479–481 (NAA), and Asp495 each bind ATP.

The protein belongs to the chaperonin (HSP60) family. In terms of assembly, forms a cylinder of 14 subunits composed of two heptameric rings stacked back-to-back. Interacts with the co-chaperonin GroES.

It localises to the cytoplasm. It catalyses the reaction ATP + H2O + a folded polypeptide = ADP + phosphate + an unfolded polypeptide.. Together with its co-chaperonin GroES, plays an essential role in assisting protein folding. The GroEL-GroES system forms a nano-cage that allows encapsulation of the non-native substrate proteins and provides a physical environment optimized to promote and accelerate protein folding. This is Chaperonin GroEL from Pseudomonas putida (strain W619).